We begin with the raw amino-acid sequence, 271 residues long: Enolase-phosphatase E1 (271 aa).

The Mg(2+) site is built by Asp16 and Glu18. Residues 150–151 and Lys199 each bind substrate; that span reads SS. Residue Asp226 participates in Mg(2+) binding.

Belongs to the HAD-like hydrolase superfamily. MasA/MtnC family. Monomer. Requires Mg(2+) as cofactor.

It localises to the cytoplasm. The protein resides in the nucleus. It carries out the reaction 5-methylsulfanyl-2,3-dioxopentyl phosphate + H2O = 1,2-dihydroxy-5-(methylsulfanyl)pent-1-en-3-one + phosphate. It participates in amino-acid biosynthesis; L-methionine biosynthesis via salvage pathway; L-methionine from S-methyl-5-thio-alpha-D-ribose 1-phosphate: step 3/6. The protein operates within amino-acid biosynthesis; L-methionine biosynthesis via salvage pathway; L-methionine from S-methyl-5-thio-alpha-D-ribose 1-phosphate: step 4/6. Bifunctional enzyme that catalyzes the enolization of 2,3-diketo-5-methylthiopentyl-1-phosphate (DK-MTP-1-P) into the intermediate 2-hydroxy-3-keto-5-methylthiopentenyl-1-phosphate (HK-MTPenyl-1-P), which is then dephosphorylated to form the acireductone 1,2-dihydroxy-3-keto-5-methylthiopentene (DHK-MTPene). The polypeptide is Enolase-phosphatase E1 (Candida dubliniensis (strain CD36 / ATCC MYA-646 / CBS 7987 / NCPF 3949 / NRRL Y-17841) (Yeast)).